Consider the following 255-residue polypeptide: tRNA (guanine-N(1)-)-methyltransferase (255 aa).

S-adenosyl-L-methionine contacts are provided by residues Gly-113 and 133-138; that span reads IGDYVL.

The protein belongs to the RNA methyltransferase TrmD family. In terms of assembly, homodimer.

The protein localises to the cytoplasm. It carries out the reaction guanosine(37) in tRNA + S-adenosyl-L-methionine = N(1)-methylguanosine(37) in tRNA + S-adenosyl-L-homocysteine + H(+). Functionally, specifically methylates guanosine-37 in various tRNAs. The sequence is that of tRNA (guanine-N(1)-)-methyltransferase from Klebsiella pneumoniae (strain 342).